Consider the following 684-residue polypeptide: Methionine--tRNA ligase (684 aa).

The 'HIGH' region motif lies at 15–25 (PYANGAIHLGH). Zn(2+)-binding residues include Cys-146, Cys-149, Cys-159, and Cys-162. The short motif at 331-335 (KMSKS) is the 'KMSKS' region element. Residue Lys-334 coordinates ATP. Residues 582–684 (DFAKLDLRVA…SGVTAGMQVR (103 aa)) form the tRNA-binding domain.

This sequence belongs to the class-I aminoacyl-tRNA synthetase family. MetG type 1 subfamily. Homodimer. Requires Zn(2+) as cofactor.

Its subcellular location is the cytoplasm. The enzyme catalyses tRNA(Met) + L-methionine + ATP = L-methionyl-tRNA(Met) + AMP + diphosphate. Is required not only for elongation of protein synthesis but also for the initiation of all mRNA translation through initiator tRNA(fMet) aminoacylation. This Glaesserella parasuis serovar 5 (strain SH0165) (Haemophilus parasuis) protein is Methionine--tRNA ligase.